The following is a 387-amino-acid chain: Dynactin subunit 2 (387 aa).

Coiled-coil stretches lie at residues 99–125, 256–282, and 355–387; these read LQRC…DTGR, SQLD…SNAT, and TGVQ…QMIK.

Belongs to the dynactin subunit 2 family. As to quaternary structure, subunit of dynactin, a multiprotein complex associated with dynein.

The protein resides in the cytoplasm. The protein localises to the cytoskeleton. Its subcellular location is the membrane. Functionally, modulates cytoplasmic dynein binding to an organelle, and plays a role in prometaphase chromosome alignment and spindle organization during mitosis. This Anopheles gambiae (African malaria mosquito) protein is Dynactin subunit 2.